The following is a 527-amino-acid chain: Bromodomain-containing protein 9 (527 aa).

The segment covering 1–16 (MNVSVTKRRKKKKKKK) has biased composition (basic residues). Positions 1 to 54 (MNVSVTKRRKKKKKKKSEKEKDKYLDEDERRRRKEEKKRKREKEQCDSEGETEV) are disordered. A compositionally biased stretch (basic and acidic residues) spans 17–30 (SEKEKDKYLDEDER). Residues 31–41 (RRRKEEKKRKR) are compositionally biased toward basic residues. A Bromo domain is found at 78-182 (NESTPLQQLL…HTGFKMMSKA (105 aa)). Positions 156–158 (TYN) are histone H4K5ac H4K8ac and histone H4K5bu H4K8bu binding. Residues 468–478 (DFHDVHNDRGG) are compositionally biased toward basic and acidic residues. Residues 468-527 (DFHDVHNDRGGSRPSSSSSMSNNSERDHHLGSPSRISVGEQQDIHDPYEFLQSPETDNQN) form a disordered region. Over residues 479-490 (SRPSSSSSMSNN) the composition is skewed to low complexity.

In terms of assembly, binds acetylated histones H3 and H4. Binds butyrylated histone H4.

The protein localises to the nucleus. In terms of biological role, plays a role in chromatin remodeling and regulation of transcription. Acts as a chromatin reader that recognizes and binds acylated histones: binds histones that are acetylated and/or butyrylated. The chain is Bromodomain-containing protein 9 (brd9) from Xenopus laevis (African clawed frog).